The sequence spans 256 residues: tRNA pseudouridine synthase A (256 aa).

Asp52 functions as the Nucleophile in the catalytic mechanism. Tyr110 contacts substrate.

It belongs to the tRNA pseudouridine synthase TruA family. As to quaternary structure, homodimer.

It catalyses the reaction uridine(38/39/40) in tRNA = pseudouridine(38/39/40) in tRNA. Its function is as follows. Formation of pseudouridine at positions 38, 39 and 40 in the anticodon stem and loop of transfer RNAs. This chain is tRNA pseudouridine synthase A, found in Stenotrophomonas maltophilia (strain R551-3).